A 469-amino-acid polypeptide reads, in one-letter code: Ribulose bisphosphate carboxylase large chain (469 aa).

Lys8 bears the N6,N6,N6-trimethyllysine mark. Substrate contacts are provided by Asn117 and Thr167. Lys169 acts as the Proton acceptor in catalysis. Position 171 (Lys171) interacts with substrate. The Mg(2+) site is built by Lys195, Asp197, and Glu198. An N6-carboxylysine modification is found at Lys195. Catalysis depends on His288, which acts as the Proton acceptor. Substrate contacts are provided by Arg289, His321, and Ser373.

This sequence belongs to the RuBisCO large chain family. Type I subfamily. Heterohexadecamer of 8 large chains and 8 small chains; disulfide-linked. The disulfide link is formed within the large subunit homodimers. Mg(2+) is required as a cofactor. The disulfide bond which can form in the large chain dimeric partners within the hexadecamer appears to be associated with oxidative stress and protein turnover.

The protein resides in the plastid. It localises to the chloroplast. The enzyme catalyses 2 (2R)-3-phosphoglycerate + 2 H(+) = D-ribulose 1,5-bisphosphate + CO2 + H2O. It carries out the reaction D-ribulose 1,5-bisphosphate + O2 = 2-phosphoglycolate + (2R)-3-phosphoglycerate + 2 H(+). Functionally, ruBisCO catalyzes two reactions: the carboxylation of D-ribulose 1,5-bisphosphate, the primary event in carbon dioxide fixation, as well as the oxidative fragmentation of the pentose substrate in the photorespiration process. Both reactions occur simultaneously and in competition at the same active site. The polypeptide is Ribulose bisphosphate carboxylase large chain (Akania bidwillii (Turnipwood)).